The following is a 510-amino-acid chain: Ribonuclease Y (510 aa).

Residues 2–22 (IYIIFSSIFAGFILGFLVRVF) form a helical membrane-spanning segment. A KH domain is found at 198–258 (TVASVELPND…IRKELAKRTL (61 aa)). In terms of domain architecture, HD spans 324–419 (VLSHSKETAI…VQIADAISAS (96 aa)).

This sequence belongs to the RNase Y family.

It localises to the cell membrane. Functionally, endoribonuclease that initiates mRNA decay. This Borreliella burgdorferi (strain ATCC 35210 / DSM 4680 / CIP 102532 / B31) (Borrelia burgdorferi) protein is Ribonuclease Y.